Reading from the N-terminus, the 456-residue chain is MEGPEGLGRKQACLAMLLHFLDTYQGLLQEEEGAGHIIKDLYLLIMKDESLYQGLREDTLRLHQLVETVELKIPEENQPPSKQVKPLFRHFRRIDSCLQTRVAFRGSDEIFCRVYMPDHSYVTIRSRLSASVQDILGSVTEKLQYSEEPAGREDSLILVAVSSSGEKVLLQPTEDCVFTALGINSHLFACTRDSYEALVPLPEEIQVSPGDTEIHRVEPEDVANHLTAFHWELFRCVHELEFVDYVFHGERGRRETANLELLLQRCSEVTHWVATEVLLCEAPGKRAQLLKKFIKIAALCKQNQDLLSFYAVVMGLDNAAVSRLRLTWEKLPGKFKNLFRKFENLTDPCRNHKSYREVISKMKPPVIPFVPLILKDLTFLHEGSKTLVDGLVNIEKLHSVAEKVRTIRKYRSRPLYLDMEASPHHLQTKAYVRQFQVIDNQNLLFELSYKLEANSQ.

One can recognise a Ras-GEF domain in the interval 218 to 454 (EPEDVANHLT…FELSYKLEAN (237 aa)).

In terms of biological role, probable guanine nucleotide exchange factor (GEF). The protein is Rap guanine nucleotide exchange factor-like 1 (RAPGEFL1) of Pongo pygmaeus (Bornean orangutan).